A 191-amino-acid polypeptide reads, in one-letter code: Thymidine kinase (191 aa).

ATP contacts are provided by residues 9 to 16 (GSMNSGKT) and 85 to 88 (DESQ). Glu86 (proton acceptor) is an active-site residue. Zn(2+) contacts are provided by Cys143, Cys146, Cys181, and Cys184.

The protein belongs to the thymidine kinase family. As to quaternary structure, homotetramer.

The protein localises to the cytoplasm. It carries out the reaction thymidine + ATP = dTMP + ADP + H(+). This Listeria monocytogenes serovar 1/2a (strain ATCC BAA-679 / EGD-e) protein is Thymidine kinase.